The following is a 465-amino-acid chain: Lipase 10 (465 aa).

The first 16 residues, 1 to 16, serve as a signal peptide directing secretion; it reads MKTLLIFLAFLSSIFA. A disulfide bridge links Cys112 with Cys285. The Charge relay system role is filled by Ser196. N-linked (GlcNAc...) asparagine glycans are attached at residues Asn231 and Asn319. Catalysis depends on charge relay system residues Asp348 and His381. An intrachain disulfide couples Cys364 to Cys409.

It belongs to the AB hydrolase superfamily. Lipase family. Class Lip subfamily.

The protein localises to the secreted. It carries out the reaction a triacylglycerol + H2O = a diacylglycerol + a fatty acid + H(+). Functionally, secreted lipase that is able to hydrolyze both the neutral triacylglycerols and the monopalmitate ester Tween 40, allowing the use of hydrolyzed products as carbon sources. Has broad lipolytic activity, which may be important for colonization and subsequent infection, therefore contributing to the persistence and virulence in human tissue. This Candida albicans (strain SC5314 / ATCC MYA-2876) (Yeast) protein is Lipase 10.